Reading from the N-terminus, the 155-residue chain is Cathelicidin-1 (155 aa).

A signal peptide spans methionine 1–alanine 29. A Pyrrolidone carboxylic acid modification is found at glutamine 30. Residues glutamine 30–alanine 143 constitute a propeptide that is removed on maturation. Intrachain disulfides connect cysteine 85-cysteine 96, cysteine 107-cysteine 124, and cysteine 146-cysteine 154.

The protein belongs to the cathelicidin family. Large granules of neutrophils.

It localises to the secreted. Functionally, potent microbicidal activity; active against S.aureus and E.coli. The polypeptide is Cathelicidin-1 (CATHL1) (Bos taurus (Bovine)).